The chain runs to 421 residues: O-glycosyltransferase braB (421 aa).

Residues 1 to 26 (MVPSVMEGAPQLGITSTDTSSAGVPP) are disordered. Polar residues predominate over residues 13–22 (GITSTDTSSA).

The protein belongs to the afumC glycosyltransferase family.

It participates in secondary metabolite biosynthesis. In terms of biological role, O-glycosyltransferase; part of the gene cluster that mediates the biosynthesis of the brasilane terpene glycosides brasilane D and E. The biosynthesis starts with the activity of the terpene cyclase braA that converts farnesyl pyrophosphate into the sesquiterpene alcohol trichobrasilenol. Subsequently, trichobrasilenol is glycosylated by the O-glycosyltransferase braB putatively using UDP-GlcNAc as sugar donor to yield brasilane A. The latter then undergoes two rounds of oxidation performed by the cytochrome P450 monooxygenase braC. In the first round braC hydroxylates C-12 forming brasilane D, which serves as substrate in the second round to establish the epoxide at the bond between C-5 and C-10 and oxidize the alcohol at C-12 to an aldehyde leading to the final product brasilane E. BraB is also able to glycosylate geraniol, linalool, perillyl alcohol, 3,4-dichlorophenol and, to a lesser extend, benzyl alcohol. The protein is O-glycosyltransferase braB of Annulohypoxylon truncatum (Hypoxylon truncatum).